A 388-amino-acid polypeptide reads, in one-letter code: Succinate--CoA ligase [ADP-forming] subunit beta (388 aa).

Positions 9 to 243 (KQLFHRYGIP…ESQLAPLEVR (235 aa)) constitute an ATP-grasp domain. ATP-binding positions include Lys-45, 52–54 (GRG), Glu-98, Val-101, and Glu-106. Mg(2+) contacts are provided by Asn-198 and Asp-212. Residues Asn-263 and 320–322 (GIM) contribute to the substrate site.

The protein belongs to the succinate/malate CoA ligase beta subunit family. As to quaternary structure, heterotetramer of two alpha and two beta subunits. Requires Mg(2+) as cofactor.

The enzyme catalyses succinate + ATP + CoA = succinyl-CoA + ADP + phosphate. The catalysed reaction is GTP + succinate + CoA = succinyl-CoA + GDP + phosphate. It participates in carbohydrate metabolism; tricarboxylic acid cycle; succinate from succinyl-CoA (ligase route): step 1/1. Its function is as follows. Succinyl-CoA synthetase functions in the citric acid cycle (TCA), coupling the hydrolysis of succinyl-CoA to the synthesis of either ATP or GTP and thus represents the only step of substrate-level phosphorylation in the TCA. The beta subunit provides nucleotide specificity of the enzyme and binds the substrate succinate, while the binding sites for coenzyme A and phosphate are found in the alpha subunit. In Syntrophotalea carbinolica (strain DSM 2380 / NBRC 103641 / GraBd1) (Pelobacter carbinolicus), this protein is Succinate--CoA ligase [ADP-forming] subunit beta.